Consider the following 2409-residue polypeptide: Reducing polyketide synthase FUB1 (2409 aa).

Positions methionine 1–alanine 43 are enriched in low complexity. Residues methionine 1–leucine 49 are disordered. Positions serine 57–aspartate 479 constitute a Ketosynthase family 3 (KS3) domain. Active-site for beta-ketoacyl synthase activity residues include cysteine 230, histidine 365, and histidine 403. The interval threonine 608–alanine 929 is malonyl-CoA:ACP transacylase (MAT) domain. Serine 699 serves as the catalytic For malonyltransferase activity. Residues leucine 994–glutamate 1127 are N-terminal hotdog fold. The PKS/mFAS DH domain maps to leucine 994–proline 1307. The tract at residues glutamate 995–arginine 1302 is dehydratase (DH) domain. Histidine 1026 functions as the Proton acceptor; for dehydratase activity in the catalytic mechanism. Residues leucine 1155 to proline 1307 are C-terminal hotdog fold. Aspartate 1220 (proton donor; for dehydratase activity) is an active-site residue. An enoyl reductase (ER) domain region spans residues glycine 1713–leucine 2025. Residues alanine 2049 to valine 2225 are ketoreductase (KR) domain. The region spanning glutamate 2328–serine 2405 is the Carrier domain. O-(pantetheine 4'-phosphoryl)serine is present on serine 2365.

It participates in mycotoxin biosynthesis. Its function is as follows. Reducing polyketide synthase; part of the gene cluster that mediates the biosynthesis of fusaric acid, a mycotoxin with low to moderate toxicity to animals and humans, but with high phytotoxic properties. L-aspartate is suggested as fusaric acid amino acid precursor that is activated and further processed to O-acetyl-L-homoserine by cluster enzymes aspartate kinase FUB3 and homoserine O-acetyltransferase FUB5, as well as enzymes of the primary metabolism. The polyketide synthase (PKS) FUB1 generates the triketide trans-2-hexenal which is presumptively released by the hydrolase FUB4 and linked to the NRPS-bound amino acid precursor by NAD(P)-dependent dehydrogenase FUB6. FUB1, FUB4, and the non-canonical NRPS Fub8 may form an enzyme complex. Further processing of the NRPS-bound intermediate might be carried out by FUB6 and the sulfhydrylase FUB7, enabling a spontaneous electrocyclization to close the carbon backbone of fusaric acid. Dihydrofusaric acid is likely to be released via reduction by the thioester reductase (TR) domain of FUB8 whereupon the final oxidation to fusaric acid may (also) be performed by the FMN-dependent dehydrogenase FUB9. This chain is Reducing polyketide synthase FUB1, found in Gibberella moniliformis (strain M3125 / FGSC 7600) (Maize ear and stalk rot fungus).